Reading from the N-terminus, the 66-residue chain is Conotoxin TsMEKL-03 (66 aa).

The signal sequence occupies residues 1–9 (VILLMSTQA). The propeptide occupies 10 to 38 (LIQSGVEKRSNKIKALSKRKTTAESWWEG). 3 cysteine pairs are disulfide-bonded: Cys-40–Cys-54, Cys-47–Cys-58, and Cys-53–Cys-63.

Belongs to the conotoxin O2 superfamily. In terms of tissue distribution, expressed by the venom duct.

The protein resides in the secreted. This Conus tessulatus (Tessellate cone) protein is Conotoxin TsMEKL-03.